The chain runs to 427 residues: Septin-6 (427 aa).

Residue Ala2 is modified to N-acetylalanine. The residue at position 27 (Ser27) is a Phosphoserine. The 267-residue stretch at 39-305 folds into the Septin-type G domain; that stretch reads QGFCFNILCV…ELYRRCKLEE (267 aa). The G1 motif stretch occupies residues 49 to 56; it reads GETGLGKS. GTP-binding positions include 49 to 56, Gly104, 185 to 193, Gly239, and Arg254; these read GETGLGKS and KSDAISKSE. The interval 101-104 is G3 motif; sequence STVG. Residues 184–187 form a G4 motif region; that stretch reads AKSD. The stretch at 321–416 forms a coiled coil; sequence QETYEAKRNE…QSQGSQAGGS (96 aa). At Lys367 the chain carries N6-acetyllysine. Residues 405-427 form a disordered region; that stretch reads LLQSQGSQAGGSQTLKRDKEKKN. The span at 407–417 shows a compositional bias: low complexity; it reads QSQGSQAGGSQ. Ser416 carries the post-translational modification Phosphoserine. Phosphothreonine is present on Thr418.

Belongs to the TRAFAC class TrmE-Era-EngA-EngB-Septin-like GTPase superfamily. Septin GTPase family. As to quaternary structure, septins polymerize into heterooligomeric protein complexes that form filaments, and associate with cellular membranes, actin filaments and microtubules. GTPase activity is required for filament formation. Filaments are assembled from asymmetrical heterotrimers, composed of SEPTIN2, SEPTIN6 and SEPTIN7 that associate head-to-head to form a hexameric unit. Within the trimer, directly interacts with SEPTIN2 and SEPTIN7. Also interacts with SEPTIN9 and SEPTIN12. Interaction with SEPTIN12 alters filament structure. Component of a septin core octameric complex consisting of SEPTIN12, SEPTIN7, SEPTIN6 and SEPTIN2 or SEPTIN4 in the order 12-7-6-2-2-6-7-12 or 12-7-6-4-4-6-7-12 and located in the sperm annulus. Interacts with SOCS7. Interacts with HNRNPA1.

Its subcellular location is the cytoplasm. It localises to the cytoskeleton. The protein resides in the spindle. It is found in the chromosome. The protein localises to the centromere. Its subcellular location is the kinetochore. It localises to the cleavage furrow. The protein resides in the midbody. It is found in the cell projection. The protein localises to the cilium. Its subcellular location is the flagellum. Filament-forming cytoskeletal GTPase. Required for normal organization of the actin cytoskeleton. Involved in cytokinesis. Forms a filamentous structure with SEPTIN12, SEPTIN6, SEPTIN2 and probably SEPTIN4 at the sperm annulus which is required for the structural integrity and motility of the sperm tail during postmeiotic differentiation. In Bos taurus (Bovine), this protein is Septin-6.